Reading from the N-terminus, the 268-residue chain is HLA class II histocompatibility antigen, DQ beta 2 chain (268 aa).

Positions 1–32 (MSWKMALQIPGGFWAAAVTVMLVMLSTPVAEA) are cleaved as a signal peptide. The tract at residues 33–126 (RDFPKDFLVQ…ELRTTLQRQV (94 aa)) is beta-1. Over 33 to 229 (RDFPKDFLVQ…RAQSESAQSK (197 aa)) the chain is Extracellular. 2 cysteine pairs are disulfide-bonded: C47/C110 and C148/C204. N51 carries an N-linked (GlcNAc...) asparagine glycan. Positions 127–229 (EPTVTISPSR…RAQSESAQSK (103 aa)) are beta-2. One can recognise an Ig-like C1-type domain in the interval 128–216 (PTVTISPSRT…EHPSLQSPIT (89 aa)). A helical membrane pass occupies residues 230 to 250 (MLSGIGGFVLGLIFLGLGLII). The Cytoplasmic segment spans residues 251-268 (RHRGQKGPRGPPPAGLLH).

It belongs to the MHC class II family. Heterodimer of an alpha and a beta subunit; also referred as MHC class II molecule. Dimer formation with HLA-DQA2, but not with HLA-DQA1, is required for efficient exit from the endoplasmic reticulum (ER). In the ER, forms a heterononamer; 3 MHC class II molecules bind to a CD74 homotrimer (also known as invariant chain or HLA class II histocompatibility antigen gamma chain). In the endosomal/lysosomal system; CD74 undergoes sequential degradation by various proteases; leaving a small fragment termed CLIP on each MHC class II molecule. MHC class II molecule interacts with HLA_DM, and HLA_DO in B-cells, in order to release CLIP and facilitate the binding of antigenic peptides. Association with HLA-DMA also occurs in skin Langerhans cells, in post-Golgi compartments. As to expression, restricted to skin Langerhans cells (at protein level).

Its subcellular location is the cell membrane. The protein resides in the endoplasmic reticulum membrane. It localises to the golgi apparatus. The protein localises to the trans-Golgi network membrane. It is found in the endosome membrane. Its subcellular location is the lysosome membrane. Its function is as follows. Binds peptides derived from antigens that access the endocytic route of antigen presenting cells (APC) and presents them on the cell surface for recognition by the CD4 T-cells. The peptide binding cleft accommodates peptides of 10-30 residues. The peptides presented by MHC class II molecules are generated mostly by degradation of proteins that access the endocytic route, where they are processed by lysosomal proteases and other hydrolases. Exogenous antigens that have been endocytosed by the APC are thus readily available for presentation via MHC II molecules, and for this reason this antigen presentation pathway is usually referred to as exogenous. As membrane proteins on their way to degradation in lysosomes as part of their normal turn-over are also contained in the endosomal/lysosomal compartments, exogenous antigens must compete with those derived from endogenous components. Autophagy is also a source of endogenous peptides, autophagosomes constitutively fuse with MHC class II loading compartments. In addition to APCs, other cells of the gastrointestinal tract, such as epithelial cells, express MHC class II molecules and CD74 and act as APCs, which is an unusual trait of the GI tract. To produce a MHC class II molecule that presents an antigen, three MHC class II molecules (heterodimers of an alpha and a beta chain) associate with a CD74 trimer in the ER to form a heterononamer. Soon after the entry of this complex into the endosomal/lysosomal system where antigen processing occurs, CD74 undergoes a sequential degradation by various proteases, including CTSS and CTSL, leaving a small fragment termed CLIP (class-II-associated invariant chain peptide). The removal of CLIP is facilitated by HLA-DM via direct binding to the alpha-beta-CLIP complex so that CLIP is released. HLA-DM stabilizes MHC class II molecules until primary high affinity antigenic peptides are bound. The MHC II molecule bound to a peptide is then transported to the cell membrane surface. In B-cells, the interaction between HLA-DM and MHC class II molecules is regulated by HLA-DO. Primary dendritic cells (DCs) also to express HLA-DO. Lysosomal microenvironment has been implicated in the regulation of antigen loading into MHC II molecules, increased acidification produces increased proteolysis and efficient peptide loading. The sequence is that of HLA class II histocompatibility antigen, DQ beta 2 chain (HLA-DQB2) from Homo sapiens (Human).